We begin with the raw amino-acid sequence, 174 residues long: Disulfide bond formation protein B (174 aa).

Over 1–14 the chain is Cytoplasmic; sequence MLNFLNICSKTRKS. A helical transmembrane segment spans residues 15 to 31; that stretch reads WVLLIFTVVILELIALY. Residues 32-49 lie on the Periplasmic side of the membrane; the sequence is LQHIVLIKPCVLCVYQRC. A disulfide bond links Cys41 and Cys44. The helical transmembrane segment at 50-65 threads the bilayer; it reads ALCGIGIAGLIGTIAP. Residues 66-71 are Cytoplasmic-facing; it reads FTPLRF. A helical membrane pass occupies residues 72 to 89; it reads FSIPIWIYSAWKGLLLAK. Residues 90–144 are Periplasmic-facing; it reads EYTDIQLHPSPFFMCDLFVQFPHWLPLNKWWPSMFDADGDCAEYKWYFLSLEISQ. A disulfide bridge links Cys104 with Cys130. The helical transmembrane segment at 145–163 threads the bilayer; it reads WMLIIFANYLIIAILVSLS. The Cytoplasmic segment spans residues 164-174; sequence QIIDLKKWNNK.

Belongs to the DsbB family.

The protein localises to the cell inner membrane. Functionally, required for disulfide bond formation in some periplasmic proteins. Acts by oxidizing the DsbA protein. This chain is Disulfide bond formation protein B, found in Blochmanniella pennsylvanica (strain BPEN).